A 435-amino-acid polypeptide reads, in one-letter code: Putative dimethyl sulfoxide reductase membrane subunit C (435 aa).

A run of 11 helical transmembrane segments spans residues 22–42 (GWLG…AYQL), 57–77 (WGLY…GLIL), 95–115 (LGVL…LPDI), 135–155 (VWDF…LWLL), 186–206 (FWTA…TGWI), 220–240 (LVAP…LLVV), 257–277 (LTSL…YLLA), 281–301 (LPHA…FLIG), 304–324 (VYFW…LATP), 333–353 (IFTA…RLVF), and 392–412 (VEIA…MAGL).

It belongs to the NrfD family. As to quaternary structure, probable multiprotein complex that likely consists of DmsA, DmsB and DmsC.

It is found in the cell membrane. Dimethyl sulfoxide (DMSO) reductase catalyzes the reduction of dimethyl sulfoxide (DMSO) to dimethyl sulfide (DMS) during anaerobic respiration; it can also use trimethylamine N-oxide (TMAO) as terminal electron acceptor. Subunit C is proposed to be a membrane anchoring subunit. The sequence is that of Putative dimethyl sulfoxide reductase membrane subunit C (dmsC) from Halobacterium salinarum (strain ATCC 700922 / JCM 11081 / NRC-1) (Halobacterium halobium).